Consider the following 107-residue polypeptide: Pyrimidine/purine nucleoside phosphorylase (107 aa).

This sequence belongs to the nucleoside phosphorylase PpnP family.

The enzyme catalyses a purine D-ribonucleoside + phosphate = a purine nucleobase + alpha-D-ribose 1-phosphate. The catalysed reaction is adenosine + phosphate = alpha-D-ribose 1-phosphate + adenine. It catalyses the reaction cytidine + phosphate = cytosine + alpha-D-ribose 1-phosphate. It carries out the reaction guanosine + phosphate = alpha-D-ribose 1-phosphate + guanine. The enzyme catalyses inosine + phosphate = alpha-D-ribose 1-phosphate + hypoxanthine. The catalysed reaction is thymidine + phosphate = 2-deoxy-alpha-D-ribose 1-phosphate + thymine. It catalyses the reaction uridine + phosphate = alpha-D-ribose 1-phosphate + uracil. It carries out the reaction xanthosine + phosphate = alpha-D-ribose 1-phosphate + xanthine. In terms of biological role, catalyzes the phosphorolysis of diverse nucleosides, yielding D-ribose 1-phosphate and the respective free bases. Can use uridine, adenosine, guanosine, cytidine, thymidine, inosine and xanthosine as substrates. Also catalyzes the reverse reactions. The protein is Pyrimidine/purine nucleoside phosphorylase of Azoarcus sp. (strain BH72).